A 576-amino-acid chain; its full sequence is Arginine--tRNA ligase (576 aa).

Positions 122–132 match the 'HIGH' region motif; that stretch reads PNVAKQMHVGH.

It belongs to the class-I aminoacyl-tRNA synthetase family. In terms of assembly, monomer.

The protein localises to the cytoplasm. The enzyme catalyses tRNA(Arg) + L-arginine + ATP = L-arginyl-tRNA(Arg) + AMP + diphosphate. This Yersinia enterocolitica serotype O:8 / biotype 1B (strain NCTC 13174 / 8081) protein is Arginine--tRNA ligase.